The sequence spans 857 residues: DNA mismatch repair protein MutS (857 aa).

621-628 (GPNMGGKS) lines the ATP pocket.

It belongs to the DNA mismatch repair MutS family.

This protein is involved in the repair of mismatches in DNA. It is possible that it carries out the mismatch recognition step. This protein has a weak ATPase activity. The sequence is that of DNA mismatch repair protein MutS from Francisella tularensis subsp. tularensis (strain SCHU S4 / Schu 4).